The primary structure comprises 442 residues: Ribulose bisphosphate carboxylase/oxygenase activase 1, chloroplastic (442 aa).

Residues 1-58 (MATSVSTIGAVNKTPLSLNNSVAGTSVPSTAFFGKTLKKVYGKGVSSPKVTNKSLRIV) constitute a chloroplast transit peptide. 169 to 176 (GGKGQGKS) lines the ATP pocket.

This sequence belongs to the RuBisCO activase family.

Its subcellular location is the plastid. The protein localises to the chloroplast stroma. Activation of RuBisCO (ribulose-1,5-bisphosphate carboxylase/oxygenase; EC 4.1.1.39) involves the ATP-dependent carboxylation of the epsilon-amino group of lysine leading to a carbamate structure. The polypeptide is Ribulose bisphosphate carboxylase/oxygenase activase 1, chloroplastic (Nicotiana tabacum (Common tobacco)).